A 248-amino-acid polypeptide reads, in one-letter code: Large ribosomal subunit protein uL4 (248 aa).

The segment at 69–92 (HVPRLKNGSRAAKVPQAKGGREAH) is disordered.

It belongs to the universal ribosomal protein uL4 family. Part of the 50S ribosomal subunit.

One of the primary rRNA binding proteins, this protein initially binds near the 5'-end of the 23S rRNA. It is important during the early stages of 50S assembly. It makes multiple contacts with different domains of the 23S rRNA in the assembled 50S subunit and ribosome. Its function is as follows. Forms part of the polypeptide exit tunnel. This is Large ribosomal subunit protein uL4 from Methanoregula boonei (strain DSM 21154 / JCM 14090 / 6A8).